The sequence spans 278 residues: Bis(5'-nucleosyl)-tetraphosphatase, symmetrical (278 aa).

The protein belongs to the Ap4A hydrolase family.

It catalyses the reaction P(1),P(4)-bis(5'-adenosyl) tetraphosphate + H2O = 2 ADP + 2 H(+). In terms of biological role, hydrolyzes diadenosine 5',5'''-P1,P4-tetraphosphate to yield ADP. This chain is Bis(5'-nucleosyl)-tetraphosphatase, symmetrical, found in Nitrosococcus oceani (strain ATCC 19707 / BCRC 17464 / JCM 30415 / NCIMB 11848 / C-107).